The sequence spans 82 residues: Small ribosomal subunit protein uS17 (82 aa).

The protein belongs to the universal ribosomal protein uS17 family. Part of the 30S ribosomal subunit.

Its function is as follows. One of the primary rRNA binding proteins, it binds specifically to the 5'-end of 16S ribosomal RNA. This Shewanella piezotolerans (strain WP3 / JCM 13877) protein is Small ribosomal subunit protein uS17.